Reading from the N-terminus, the 295-residue chain is 4-hydroxy-tetrahydrodipicolinate synthase (295 aa).

T48 is a pyruvate binding site. Y136 serves as the catalytic Proton donor/acceptor. K164 serves as the catalytic Schiff-base intermediate with substrate. I206 provides a ligand contact to pyruvate.

The protein belongs to the DapA family. In terms of assembly, homotetramer; dimer of dimers.

Its subcellular location is the cytoplasm. The enzyme catalyses L-aspartate 4-semialdehyde + pyruvate = (2S,4S)-4-hydroxy-2,3,4,5-tetrahydrodipicolinate + H2O + H(+). Its pathway is amino-acid biosynthesis; L-lysine biosynthesis via DAP pathway; (S)-tetrahydrodipicolinate from L-aspartate: step 3/4. Catalyzes the condensation of (S)-aspartate-beta-semialdehyde [(S)-ASA] and pyruvate to 4-hydroxy-tetrahydrodipicolinate (HTPA). The sequence is that of 4-hydroxy-tetrahydrodipicolinate synthase from Actinobacillus pleuropneumoniae serotype 7 (strain AP76).